The primary structure comprises 542 residues: Chaperonin GroEL (542 aa).

Residues 29–32 (TLGP), 86–90 (DGTTT), G413, and D493 contribute to the ATP site.

It belongs to the chaperonin (HSP60) family. As to quaternary structure, forms a cylinder of 14 subunits composed of two heptameric rings stacked back-to-back. Interacts with the co-chaperonin GroES.

The protein localises to the cytoplasm. The catalysed reaction is ATP + H2O + a folded polypeptide = ADP + phosphate + an unfolded polypeptide.. Functionally, together with its co-chaperonin GroES, plays an essential role in assisting protein folding. The GroEL-GroES system forms a nano-cage that allows encapsulation of the non-native substrate proteins and provides a physical environment optimized to promote and accelerate protein folding. The polypeptide is Chaperonin GroEL (Elusimicrobium minutum (strain Pei191)).